The sequence spans 156 residues: Transcription elongation factor GreA (156 aa).

A coiled-coil region spans residues 1 to 32 (MKKVRLTREGYEKLKKELEDLKRKFMYEISER).

Belongs to the GreA/GreB family.

In terms of biological role, necessary for efficient RNA polymerase transcription elongation past template-encoded arresting sites. The arresting sites in DNA have the property of trapping a certain fraction of elongating RNA polymerases that pass through, resulting in locked ternary complexes. Cleavage of the nascent transcript by cleavage factors such as GreA or GreB allows the resumption of elongation from the new 3'terminus. GreA releases sequences of 2 to 3 nucleotides. The chain is Transcription elongation factor GreA from Thermotoga sp. (strain RQ2).